Here is a 514-residue protein sequence, read N- to C-terminus: Membrane-bound lytic murein transglycosylase F (514 aa).

The first 30 residues, 1–30 (MLSNNPLITKFRELFTVALVLALLSGCQWQ), serve as a signal peptide directing secretion. The segment at 31 to 271 (DDNLTDLEKI…QLEEKYFGHV (241 aa)) is non-LT domain. An LT domain region spans residues 272 to 514 (GSFDYVDTRA…KTIEDPGPSQ (243 aa)). Residue Glu316 is part of the active site. The interval 482–514 (PVPPRQANVDGSLNNEAAISSAEKTIEDPGPSQ) is disordered. The segment covering 490–499 (VDGSLNNEAA) has biased composition (polar residues).

In the N-terminal section; belongs to the bacterial solute-binding protein 3 family. This sequence in the C-terminal section; belongs to the transglycosylase Slt family.

It localises to the cell outer membrane. The enzyme catalyses Exolytic cleavage of the (1-&gt;4)-beta-glycosidic linkage between N-acetylmuramic acid (MurNAc) and N-acetylglucosamine (GlcNAc) residues in peptidoglycan, from either the reducing or the non-reducing ends of the peptidoglycan chains, with concomitant formation of a 1,6-anhydrobond in the MurNAc residue.. Murein-degrading enzyme that degrades murein glycan strands and insoluble, high-molecular weight murein sacculi, with the concomitant formation of a 1,6-anhydromuramoyl product. Lytic transglycosylases (LTs) play an integral role in the metabolism of the peptidoglycan (PG) sacculus. Their lytic action creates space within the PG sacculus to allow for its expansion as well as for the insertion of various structures such as secretion systems and flagella. This Photobacterium profundum (strain SS9) protein is Membrane-bound lytic murein transglycosylase F.